A 453-amino-acid chain; its full sequence is Sensor histidine kinase CpxA (453 aa).

Over 1–4 the chain is Cytoplasmic; sequence MTAR. Residues 5 to 25 traverse the membrane as a helical segment; that stretch reads IFAIFWLTLALVLMLVLMLPK. Residues 26–159 lie on the Periplasmic side of the membrane; that stretch reads LDSRQMTELL…SDFINLLFDR (134 aa). A helical membrane pass occupies residues 160 to 180; the sequence is PLLLLIVTMLVSAPLLLWLAW. The HAMP domain occupies 180-233; sequence WSLAKPARKLKNAADEVAQGNLRQHPELEAGPQEFLAAGASFNQMVTALERMMT. Residues 181 to 453 lie on the Cytoplasmic side of the membrane; the sequence is SLAKPARKLK…TIWLPLYKRT (273 aa). Residues 241–451 form the Histidine kinase domain; that stretch reads DISHELRTPL…RLTIWLPLYK (211 aa). The active-site Nucleophile is His-244. A Phosphohistidine; by autocatalysis modification is found at His-244. Residues 244 to 247, 355 to 360, Asp-382, 401 to 402, and 412 to 417 contribute to the ATP site; these read HELR, RNALRY, RT, and GTGLGL.

In terms of assembly, interacts with cognate response regulator CpxR.

Its subcellular location is the cell inner membrane. It carries out the reaction ATP + protein L-histidine = ADP + protein N-phospho-L-histidine.. The two-component system is activated by envelope stress such as overexpression of some (misfolded) periplasmic proteins. Functionally, histidine kinase member of the two-component regulatory system CpxA/CpxR which responds to envelope stress response by activating or, in some cases, repressing expression of downstream genes. Activates CpxR by phosphorylation. This chain is Sensor histidine kinase CpxA, found in Klebsiella pneumoniae subsp. pneumoniae (strain HS11286).